The following is a 256-amino-acid chain: Bialaphos biosynthetic pathway regulatory protein (256 aa).

Residues 184–249 (ETADAIDVSD…QLGARAAECR (66 aa)) enclose the HTH luxR-type domain. The H-T-H motif DNA-binding region spans 208 to 227 (DVAMARSLGISTRTLRRVIT).

Involved in the regulation of the biosynthesis of phosphinothricin tripeptide (PTT), also known as bialaphos (BA), a natural-product antibiotic and potent herbicide. This is Bialaphos biosynthetic pathway regulatory protein (brpA) from Streptomyces hygroscopicus.